We begin with the raw amino-acid sequence, 395 residues long: Transmembrane protein 79 (395 aa).

A disordered region spans residues 1 to 115 (MTEPETLALL…PPTKLEELPE (115 aa)). The Cytoplasmic portion of the chain corresponds to 1–204 (MTEPETLALL…GREALRAVAS (204 aa)). The helical transmembrane segment at 205–225 (VGAALILFPCLLYGAYAFLPF) threads the bilayer. At 226 to 244 (DAPRLPTMSSRLIYTLRCG) the chain is on the extracellular side. Residues 245–265 (VFATFPIVLGILVYGLSLLCF) traverse the membrane as a helical segment. At 266-290 (AALRPFGEPRREVEIHRQYVAQSVQ) the chain is on the cytoplasmic side. The helical transmembrane segment at 291–311 (LFILYFFNLAVLSTYLPQDAL) threads the bilayer. Residues 312–313 (KL) are Extracellular-facing. A helical membrane pass occupies residues 314–334 (LPLLTGLFAISRLIYWLTFAV). Residues 335 to 343 (GRSFRGFGY) are Cytoplasmic-facing. A helical membrane pass occupies residues 344-364 (GLTFLPLLSMLLWNFYYMFVV). The Extracellular portion of the chain corresponds to 365-395 (EPERMLTASESRLDYPDHARSASDYRPRSRG).

Its subcellular location is the lysosome. The protein localises to the golgi apparatus. The protein resides in the trans-Golgi network. It localises to the membrane. Contributes to the epidermal integrity and skin barrier function. Plays a role in the lamellar granule (LG) secretory system and in the stratum corneum (SC) epithelial cell formation. The polypeptide is Transmembrane protein 79 (TMEM79) (Bos taurus (Bovine)).